Here is a 58-residue protein sequence, read N- to C-terminus: Small ribosomal subunit protein bS21 (58 aa).

Positions 32–42 (VRKREHYEKPS) are enriched in basic and acidic residues. The segment at 32-58 (VRKREHYEKPSVKKKKKSEAARKRKFK) is disordered. Residues 43–58 (VKKKKKSEAARKRKFK) are compositionally biased toward basic residues.

It belongs to the bacterial ribosomal protein bS21 family.

This is Small ribosomal subunit protein bS21 from Clostridium botulinum (strain Okra / Type B1).